The primary structure comprises 298 residues: Cyclin-dependent kinase 2 homolog (298 aa).

Positions Tyr-4–Phe-284 constitute a Protein kinase domain. ATP is bound by residues Ile-10–Val-18 and Lys-32. Thr-14 bears the Phosphothreonine mark. Tyr-15 is modified (phosphotyrosine). The Proton acceptor role is filled by Asp-125. Thr-158 carries the phosphothreonine modification.

It belongs to the protein kinase superfamily. CMGC Ser/Thr protein kinase family. CDC2/CDKX subfamily. In terms of assembly, may form a complex composed of at least the catalytic subunit CRK2 and a cyclin. Requires Mg(2+) as cofactor.

It localises to the cytoplasm. It catalyses the reaction L-seryl-[protein] + ATP = O-phospho-L-seryl-[protein] + ADP + H(+). The catalysed reaction is L-threonyl-[protein] + ATP = O-phospho-L-threonyl-[protein] + ADP + H(+). The enzyme catalyses [DNA-directed RNA polymerase] + ATP = phospho-[DNA-directed RNA polymerase] + ADP + H(+). Its activity is regulated as follows. Phosphorylation at Thr-14 or Tyr-15 inactivates the enzyme, while phosphorylation at Thr-158 activates it. Its function is as follows. Serine/threonine-protein kinase. Involved in the control of the cell cycle. Required for entry into S-phase and mitosis. Probable component of the kinase complex that phosphorylates the repetitive C-terminus of RNA polymerase II. This chain is Cyclin-dependent kinase 2 homolog, found in Theileria parva (East coast fever infection agent).